The chain runs to 125 residues: Phosphoribosyl-AMP cyclohydrolase (125 aa).

Mg(2+) is bound at residue aspartate 91. Residue cysteine 92 coordinates Zn(2+). 2 residues coordinate Mg(2+): aspartate 93 and aspartate 95. Zn(2+) contacts are provided by cysteine 108 and cysteine 115.

It belongs to the PRA-CH family. In terms of assembly, homodimer. It depends on Mg(2+) as a cofactor. The cofactor is Zn(2+).

The protein resides in the cytoplasm. The enzyme catalyses 1-(5-phospho-beta-D-ribosyl)-5'-AMP + H2O = 1-(5-phospho-beta-D-ribosyl)-5-[(5-phospho-beta-D-ribosylamino)methylideneamino]imidazole-4-carboxamide. The protein operates within amino-acid biosynthesis; L-histidine biosynthesis; L-histidine from 5-phospho-alpha-D-ribose 1-diphosphate: step 3/9. Its function is as follows. Catalyzes the hydrolysis of the adenine ring of phosphoribosyl-AMP. The protein is Phosphoribosyl-AMP cyclohydrolase of Streptomyces griseus subsp. griseus (strain JCM 4626 / CBS 651.72 / NBRC 13350 / KCC S-0626 / ISP 5235).